A 445-amino-acid polypeptide reads, in one-letter code: Histone acetyltransferase of the MYST family 1 (445 aa).

Residues 60 to 118 (LEVGTRVMCQWRDGKYHPVKVIERRKNYNGGHNDYEYYVHYTEFNRRLDEWIKLEQLDL) enclose the Tudor-knot domain. One can recognise an MYST-type HAT domain in the interval 169–440 (TKVKNIATIE…VDVSKMIWTP (272 aa)). Residues 202 to 227 (LFFCEFCLSFMKRKEQLQRHMRKCDL) form a C2HC MYST-type zinc finger. Position 269 is an N6-acetyllysine; by autocatalysis (Lys-269). Acetyl-CoA contacts are provided by residues 312 to 314 (ILT) and 319 to 325 (QRKGYGK). Glu-345 (proton donor/acceptor) is an active-site residue. Ser-349 serves as a coordination point for acetyl-CoA.

It belongs to the MYST (SAS/MOZ) family. Interacts with MRG1 and MRG2. Component of the NuA4 histone acetyltransferase complex. In terms of processing, autoacetylation at Lys-269 is required for proper function. Expressed in cotyledons, leaves, stems, roots and, at higher levels in developing flowers, particularly in the anthers and gynoecia. Constitutively expressed in all tissues, predominantly in shoot apical meristem.

The protein resides in the nucleus. It catalyses the reaction L-lysyl-[protein] + acetyl-CoA = N(6)-acetyl-L-lysyl-[protein] + CoA + H(+). Functionally, histone acetyltransferase which may be involved in transcriptional activation. Acetylates 'Lys-5' of histone H4 (H4K5ac). Essential for gametophyte development. Involved in DNA repair after UV-B exposure. Negative regulator of flowering controlling the H4K5ac levels in the FLC chromatin. The protein is Histone acetyltransferase of the MYST family 1 of Arabidopsis thaliana (Mouse-ear cress).